A 261-amino-acid polypeptide reads, in one-letter code: Imidazole glycerol phosphate synthase subunit HisF (261 aa).

Active-site residues include Asp11 and Asp130.

It belongs to the HisA/HisF family. In terms of assembly, heterodimer of HisH and HisF.

It localises to the cytoplasm. It carries out the reaction 5-[(5-phospho-1-deoxy-D-ribulos-1-ylimino)methylamino]-1-(5-phospho-beta-D-ribosyl)imidazole-4-carboxamide + L-glutamine = D-erythro-1-(imidazol-4-yl)glycerol 3-phosphate + 5-amino-1-(5-phospho-beta-D-ribosyl)imidazole-4-carboxamide + L-glutamate + H(+). The protein operates within amino-acid biosynthesis; L-histidine biosynthesis; L-histidine from 5-phospho-alpha-D-ribose 1-diphosphate: step 5/9. IGPS catalyzes the conversion of PRFAR and glutamine to IGP, AICAR and glutamate. The HisF subunit catalyzes the cyclization activity that produces IGP and AICAR from PRFAR using the ammonia provided by the HisH subunit. The polypeptide is Imidazole glycerol phosphate synthase subunit HisF (Jannaschia sp. (strain CCS1)).